A 233-amino-acid chain; its full sequence is Apoptosis regulator Bcl-2 (233 aa).

Positions D10 to W30 match the BH4 motif. The segment at A32 to G86 is disordered. The BH3 signature appears at V87 to R101. Residues E130 to G149 carry the BH1 motif. Residues N181–Y196 carry the BH2 motif. A helical transmembrane segment spans residues W208–A228.

The protein belongs to the Bcl-2 family. Forms homodimers, and heterodimers with BAX, BAD, BAK and Bcl-X(L). Heterodimerization with BAX requires intact BH1 and BH2 motifs, and is necessary for anti-apoptotic activity. Also interacts with APAF1 and RAF-1. In terms of tissue distribution, in adult chicken expressed, in thymus, spleen, kidney, heart, ovary and brain, with the highest levels in the thymus. In the embryo, highly levels expressed in all tissues with high levels in the bursa of Fabricius.

The protein resides in the mitochondrion outer membrane. Its subcellular location is the nucleus membrane. It localises to the endoplasmic reticulum membrane. It is found in the cytoplasm. Suppresses apoptosis in a variety of cell systems including factor-dependent lymphohematopoietic and neural cells. Regulates cell death by controlling the mitochondrial membrane permeability. Appears to function in a feedback loop system with caspases. Inhibits caspase activity either by preventing the release of cytochrome c from the mitochondria and/or by binding to the apoptosis-activating factor (APAF-1). The sequence is that of Apoptosis regulator Bcl-2 (BCL2) from Gallus gallus (Chicken).